The sequence spans 357 residues: Dual-specificity RNA methyltransferase RlmN (357 aa).

The active-site Proton acceptor is the Glu89. Residues 109-340 (EGEKYTVCVS…CTIRESKALD (232 aa)) form the Radical SAM core domain. Cys116 and Cys345 are joined by a disulfide. Residues Cys123, Cys127, and Cys130 each contribute to the [4Fe-4S] cluster site. S-adenosyl-L-methionine is bound by residues 173-174 (GE), Ser203, 226-228 (SLH), and Asn302. The active-site S-methylcysteine intermediate is Cys345.

It belongs to the radical SAM superfamily. RlmN family. Requires [4Fe-4S] cluster as cofactor.

The protein localises to the cytoplasm. It carries out the reaction adenosine(2503) in 23S rRNA + 2 reduced [2Fe-2S]-[ferredoxin] + 2 S-adenosyl-L-methionine = 2-methyladenosine(2503) in 23S rRNA + 5'-deoxyadenosine + L-methionine + 2 oxidized [2Fe-2S]-[ferredoxin] + S-adenosyl-L-homocysteine. The enzyme catalyses adenosine(37) in tRNA + 2 reduced [2Fe-2S]-[ferredoxin] + 2 S-adenosyl-L-methionine = 2-methyladenosine(37) in tRNA + 5'-deoxyadenosine + L-methionine + 2 oxidized [2Fe-2S]-[ferredoxin] + S-adenosyl-L-homocysteine. Its function is as follows. Specifically methylates position 2 of adenine 2503 in 23S rRNA and position 2 of adenine 37 in tRNAs. m2A2503 modification seems to play a crucial role in the proofreading step occurring at the peptidyl transferase center and thus would serve to optimize ribosomal fidelity. This Helicobacter pylori (strain J99 / ATCC 700824) (Campylobacter pylori J99) protein is Dual-specificity RNA methyltransferase RlmN.